The chain runs to 57 residues: U17-myrmicitoxin-Tb1a (57 aa).

An N-terminal signal peptide occupies residues 1–29; it reads MEKNRTNIFSVYLMITFLLISIFITMVMS. Positions 30 to 33 are excised as a propeptide; it reads DGEA. A disulfide bridge connects residues Cys42 and Cys53. Ala56 carries the alanine amide modification.

In terms of processing, O-glycosylated. In terms of tissue distribution, expressed by the venom gland.

Its subcellular location is the secreted. Its function is as follows. Serine protease inhibitor which exhibits antifibrinolytic, antielastolytic and antimicrobial activities. Displays antimicrobial activity against bacteria and fungi. Likely functions in the innate immune response to microbial infection and possibly in the venom, as an antifibrinolytic agent. The chain is U17-myrmicitoxin-Tb1a from Tetramorium bicarinatum (Tramp ant).